A 313-amino-acid polypeptide reads, in one-letter code: Urease accessory protein UreD (313 aa).

Residues 1–30 (MTDLSFPGQAASPGEGAGQTPSGGSGHRFD) form a disordered region. Residues 15-26 (EGAGQTPSGGSG) are compositionally biased toward gly residues.

This sequence belongs to the UreD family. UreD, UreF and UreG form a complex that acts as a GTP-hydrolysis-dependent molecular chaperone, activating the urease apoprotein by helping to assemble the nickel containing metallocenter of UreC. The UreE protein probably delivers the nickel.

It localises to the cytoplasm. Required for maturation of urease via the functional incorporation of the urease nickel metallocenter. This chain is Urease accessory protein UreD, found in Chromohalobacter salexigens (strain ATCC BAA-138 / DSM 3043 / CIP 106854 / NCIMB 13768 / 1H11).